We begin with the raw amino-acid sequence, 121 residues long: Securin (121 aa).

The segment at 1-24 (RATEKSVKTNGPLKQKQTTFSAKK) is disordered. 2 consecutive short sequence motifs (TEK-box) follow at residues 3–5 (TEK) and 26–28 (TEK). The tract at residues 93-121 (LGPPSPLNMPSPPWESDVLQSPSSILSTL) is disordered. An SH3-binding motif is present at residues 95 to 105 (PPSPLNMPSPP). Residues 95-105 (PPSPLNMPSPP) are compositionally biased toward pro residues. Ser-97 bears the Phosphoserine; by CDK1 mark. The span at 110–121 (VLQSPSSILSTL) shows a compositional bias: polar residues.

This sequence belongs to the securin family. As to quaternary structure, interacts with the caspase-like ESPL1, and prevents its protease activity probably by covering its active site. Interacts with p53/TP53 and blocks its activity probably by blocking its binding to DNA. Interacts with the Ku 70 kDa subunit of ds-DNA kinase. Interacts with PTTG1IP. Interacts with RPS10 and DNAJA1. In terms of processing, phosphorylated by CDK1 during mitosis. Phosphorylated in vitro by ds-DNA kinase. Post-translationally, ubiquitinated through 'Lys-11' linkage of ubiquitin moieties by the anaphase promoting complex (APC) at the onset of anaphase, conducting to its degradation. 'Lys-11'-linked ubiquitination is mediated by the E2 ligase UBE2C/UBCH10.

The protein resides in the cytoplasm. Its subcellular location is the nucleus. Its function is as follows. Regulatory protein, which plays a central role in chromosome stability, in the p53/TP53 pathway, and DNA repair. Probably acts by blocking the action of key proteins. During the mitosis, it blocks Separase/ESPL1 function, preventing the proteolysis of the cohesin complex and the subsequent segregation of the chromosomes. At the onset of anaphase, it is ubiquitinated, conducting to its destruction and to the liberation of ESPL1. Its function is however not limited to a blocking activity, since it is required to activate ESPL1. Negatively regulates the transcriptional activity and related apoptosis activity of p53/TP53. The negative regulation of p53/TP53 may explain the strong transforming capability of the protein when it is overexpressed. May also play a role in DNA repair via its interaction with Ku, possibly by connecting DNA damage-response pathways with sister chromatid separation. The protein is Securin (PTTG1) of Sus scrofa (Pig).